Consider the following 557-residue polypeptide: MAPSNIVVQSSSTPPVAGGDEEFAPSVWGDFFVTYAPPVSQASEQRMSERAELLKAQVCQAFDAASMDVAGLVTYVDTLERLGLDNHFRDLIGAALERIGAEELPEHGGGLHIVALRFRLLRQHGIWVSTDVFDAFREDAGGFCSSLCSDDPRGLLSLYNAAHMAVPGEVVLDDAIAFARGRLLDIISKGEVRSPVSEQITRALDIPLPRFTRRLETMHYIAEYEHEEAHDGLLLELARLNFVLVRALHLRELKDLSLWWRELYNTVKLPYARDRMVEIYFWTCGMLHEEEYSLARMFFAKTFGMVSLMDDTFDVHATLDECHKLKEAMQRWDESEVSILPEYLRLLYIKTLSNFKEFEEILEPNKKYRMAYTKEAYKLCSKNYLKEAIWSNQKYQPSFKEHEELSIMTSGLPMLTILTLMGFGDEATPEAFEWVSSVPEMVRAGSQVTRFLNDLSSYKLGKNKKDMPGSVETYMVENGLTGDEAAAAIAALLENRWRILNQTRMEIDHTLLPAVQVVVNMARANEIIYLHGRDAYTFGADLKDLVTTLFLKQVLPL.

D310 and D314 together coordinate Mg(2+). Substrate contacts are provided by D310, D314, and R450. The short motif at D310–D314 is the DDXXD motif element. Mg(2+)-binding residues include N453 and S457.

The protein belongs to the terpene synthase family. In terms of assembly, monomer. The cofactor is Mg(2+). It depends on Mn(2+) as a cofactor.

It is found in the cytoplasm. It carries out the reaction (2E,6E)-farnesyl diphosphate + 2 H2O = 7-epi-ent-eudesmane-5,11-diol + diphosphate. The protein operates within secondary metabolite biosynthesis; terpenoid biosynthesis. Component of the volatile terpenes biosynthesis pathways. Dihydroxylated sesquiterpenoid synthase that generates dually hydroxylated products directly from (E,E)-farnesyl diphosphate, primarily eudesmane-2,11-diol, along with two closely related structural isomers. In Zea mays (Maize), this protein is Eudesmanediol synthase.